Consider the following 249-residue polypeptide: Zinc finger protein CG30 (249 aa).

Residues 8–66 (CHICCSVGEIKNYFLQPVDAITILPIVELHTCRHQLCVMCVRKIAQRGRDKRVECPMCR) form an RING-type zinc finger.

This is Zinc finger protein CG30 (CG30) from Orgyia pseudotsugata (Douglas-fir tussock moth).